The sequence spans 464 residues: Argininosuccinate lyase (464 aa).

The protein belongs to the lyase 1 family. Argininosuccinate lyase subfamily.

The protein resides in the cytoplasm. The catalysed reaction is 2-(N(omega)-L-arginino)succinate = fumarate + L-arginine. It functions in the pathway amino-acid biosynthesis; L-arginine biosynthesis; L-arginine from L-ornithine and carbamoyl phosphate: step 3/3. In Pseudomonas syringae pv. syringae (strain B728a), this protein is Argininosuccinate lyase.